Here is a 169-residue protein sequence, read N- to C-terminus: Allophycocyanin subunit beta-18 (169 aa).

Asn-72 is subject to N4-methylasparagine. Cys-82 serves as a coordination point for (2R,3E)-phycocyanobilin.

It belongs to the phycobiliprotein family. In terms of assembly, heterodimer of an alpha and a beta chain. Contains one covalently linked bilin chromophore.

The protein localises to the plastid. Its subcellular location is the chloroplast thylakoid membrane. Functionally, light-harvesting photosynthetic bile pigment-protein from the phycobiliprotein complex. Allophycocyanin has a maximum absorption at approximately 650 nanometers. This is Allophycocyanin subunit beta-18 (apcF) from Pyropia yezoensis (Susabi-nori).